We begin with the raw amino-acid sequence, 604 residues long: Netrin-1 (604 aa).

Residues 1 to 24 (MMRAVWEALAALAAVACLVGAVRG) form the signal peptide. Residues 47 to 284 (HPRRCIPDFV…AVSDLQVGGR (238 aa)) enclose the Laminin N-terminal domain. N-linked (GlcNAc...) asparagine glycans are attached at residues Asn95, Asn116, and Asn131. Cystine bridges form between Cys119–Cys152, Cys285–Cys294, Cys287–Cys304, Cys306–Cys315, Cys318–Cys338, Cys341–Cys350, Cys343–Cys368, Cys371–Cys380, Cys383–Cys401, Cys404–Cys416, Cys406–Cys423, Cys425–Cys434, Cys437–Cys451, Cys472–Cys544, and Cys491–Cys601. 3 consecutive Laminin EGF-like domains span residues 285–340 (CKCN…ECVA), 341–403 (CNCN…ACKA), and 404–453 (CDCH…PCIK). N-linked (GlcNAc...) asparagine glycosylation occurs at Asn417. In terms of domain architecture, NTR spans 472–601 (CDSYCKASKG…FQQREKKGKC (130 aa)). The Cell attachment site motif lies at 530-532 (RGD).

Binds to its receptors; DCC, UNC5A, UNC5B, UNC5C and probably UNC5D. Binds to its receptor; DSCAM. Interacts with APP. In the embryo, widely expressed in the developing nervous system and in mesodermal tissues.

It localises to the secreted. The protein resides in the cytoplasm. Functionally, netrins control guidance of CNS commissural axons and peripheral motor axons. Its association with either DCC or some UNC5 receptors will lead to axon attraction or repulsion, respectively. Binding to UNC5C might cause dissociation of UNC5C from polymerized TUBB3 in microtubules and thereby lead to increased microtubule dynamics and axon repulsion. Involved in dorsal root ganglion axon projection towards the spinal cord. It also serves as a survival factor via its association with its receptors which prevent the initiation of apoptosis. Involved in colorectal tumorigenesis by regulating apoptosis. The protein is Netrin-1 (Ntn1) of Mus musculus (Mouse).